Reading from the N-terminus, the 81-residue chain is Cytotoxin 2 (81 aa).

An N-terminal signal peptide occupies residues 1-21 (MKTLLLTLVVVTIVCLDLGYT). Cystine bridges form between Cys-24/Cys-42, Cys-35/Cys-59, Cys-63/Cys-74, and Cys-75/Cys-80.

This sequence belongs to the three-finger toxin family. Short-chain subfamily. Type IA cytotoxin sub-subfamily. In terms of assembly, monomer in solution; Homodimer and oligomer in the presence of negatively charged lipids forming a pore with a size ranging between 20 and 30 Angstroms. In terms of tissue distribution, expressed by the venom gland.

Its subcellular location is the secreted. It localises to the target cell membrane. Its function is as follows. Basic protein that binds to cell membrane and depolarizes cardiomyocytes. It also shows lytic activities, but 2-fold less important than that of CTX-A4. It binds to the integrin alpha-V/beta-3 (ITGAV/ITGB3) with a moderate affinity. It may interact with sulfatides in the cell membrane which induces pore formation and cell internalization and is responsible for cytotoxicity in cardiomyocytes. It may also target the mitochondrial membrane and induce mitochondrial swelling and fragmentation. In Naja atra (Chinese cobra), this protein is Cytotoxin 2.